Reading from the N-terminus, the 1130-residue chain is MRCLAPRPAGSYLSEPQGSSQCATMELGPLEGGYLELLNSDADPLCLYHFYDQMDLAGEEEIELYSEPDTDTINCDQFSRLLCDMEGDEETREAYANIAELDQYVFQDSQLEGLSKDIFKHIGPDEVIGESMEMPAEVGQKSQKRPFPEELPADLKHWKPAEPPTVVTGSLLVGPVSDCSTLPCLPLPALFNQEPASGQMRLEKTDQIPMPFSSSSLSCLNLPEGPIQFVPTISTLPHGLWQISEAGTGVSSIFIYHGEVPQASQVPPPSGFTVHGLPTSPDRPGSTSPFAPSATDLPSMPEPALTSRANMTEHKTSPTQCPAAGEVSNKLPKWPEPVEQFYRSLQDTYGAEPAGPDGILVEVDLVQARLERSSSKSLERELATPDWAERQLAQGGLAEVLLAAKEHRRPRETRVIAVLGKAGQGKSYWAGAVSRAWACGRLPQYDFVFSVPCHCLNRPGDAYGLQDLLFSLGPQPLVAADEVFSHILKRPDRVLLILDGFEELEAQDGFLHSTCGPAPAEPCSLRGLLAGLFQKKLLRGCTLLLTARPRGRLVQSLSKADALFELSGFSMEQAQAYVMRYFESSGMTEHQDRALTLLRDRPLLLSHSHSPTLCRAVCQLSEALLELGEDAKLPSTLTGLYVGLLGRAALDSPPGALAELAKLAWELGRRHQSTLQEDQFPSADVRTWAMAKGLVQHPPRAAESELAFPSFLLQCFLGALWLALSGEIKDKELPQYLALTPRKKRPYDNWLEGVPRFLAGLIFQPPARCLGALLGPSAAASVDRKQKVLARYLKRLQPGTLRARQLLELLHCAHEAEEAGIWQHVVQELPGRLSFLGTRLTPPDAHVLGKALEAAGQDFSLDLRSTGICPSGLGSLVGLSCVTRFRAALSDTVALWESLQQHGETKLLQAAEEKFTIEPFKAKSLKDVEDLGKLVQTQRTRSSSEDTAGELPAVRDLKKLEFALGPVSGPQAFPKLVRILTAFSSLQHLDLDALSENKIGDEGVSQLSATFPQLKSLETLNLSQNNITDLGAYKLAEALPSLAASLLRLSLYNNCICDVGAESLARVLPDMVSLRVMDVQYNKFTAAGAQQLAASLRRCPHVETLAMWTPTIPFSVQEHLQQQDSRISLR.

The interval 94 to 132 is required for acetyltransferase activity; sequence AYANIAELDQYVFQDSQLEGLSKDIFKHIGPDEVIGESM. Positions 269–303 are disordered; that stretch reads PSGFTVHGLPTSPDRPGSTSPFAPSATDLPSMPEP. An NACHT domain is found at 414–724; it reads RVIAVLGKAG…CFLGALWLAL (311 aa). Residue 420 to 427 coordinates GTP; that stretch reads GKAGQGKS. LRR repeat units follow at residues 985–1008, 1016–1037, 1045–1066, and 1073–1093; these read SLQH…SQLS, SLET…KLAE, SLLR…SLAR, and SLRV…QQLA.

Interacts with ZXDA and ZXDC. Interacts with PML (isoform PML-2). Interacts with TAF7; interaction inhibits CIITA acetyltransferase activity, thereby repressing transcription. In terms of processing, autophosphorylated, affecting interaction with TAF7.

The protein resides in the nucleus. Its subcellular location is the PML body. It catalyses the reaction L-seryl-[protein] + ATP = O-phospho-L-seryl-[protein] + ADP + H(+). The catalysed reaction is L-threonyl-[protein] + ATP = O-phospho-L-threonyl-[protein] + ADP + H(+). Essential for transcriptional activity of the HLA class II promoter; activation is via the proximal promoter. Does not bind DNA. May act in a coactivator-like fashion through protein-protein interactions by contacting factors binding to the proximal MHC class II promoter, to elements of the transcription machinery, or both PubMed:8402893, PubMed:7749984,. Alternatively it may activate HLA class II transcription by modifying proteins that bind to the MHC class II promoter. Also mediates enhanced MHC class I transcription; the promoter element requirements for CIITA-mediated transcription are distinct from those of constitutive MHC class I transcription, and CIITA can functionally replace TAF1 at these genes. Activates CD74 transcription. Exhibits intrinsic GTP-stimulated acetyltransferase activity. Exhibits serine/threonine protein kinase activity: can phosphorylate the TFIID component TAF7, the RAP74 subunit of the general transcription factor TFIIF, histone H2B at 'Ser-37' and other histones (in vitro). Has antiviral activity against Ebola virus and coronaviruses, including SARS-CoV-2. Induces resistance by up-regulation of the p41 isoform of CD74, which blocks cathepsin-mediated cleavage of viral glycoproteins, thereby preventing viral fusion. Functionally, exhibits dominant-negative suppression of MHC class II gene expression. The sequence is that of MHC class II transactivator from Homo sapiens (Human).